The sequence spans 226 residues: Lipoprotein-releasing system ATP-binding protein LolD (226 aa).

The ABC transporter domain maps to 6–226 (IELKSVERHY…TLADGKVVPL (221 aa)). 42–49 (APSGTGKS) lines the ATP pocket.

This sequence belongs to the ABC transporter superfamily. Lipoprotein translocase (TC 3.A.1.125) family. In terms of assembly, the complex is composed of two ATP-binding proteins (LolD) and two transmembrane proteins (LolC and LolE).

It localises to the cell inner membrane. Functionally, part of the ABC transporter complex LolCDE involved in the translocation of mature outer membrane-directed lipoproteins, from the inner membrane to the periplasmic chaperone, LolA. Responsible for the formation of the LolA-lipoprotein complex in an ATP-dependent manner. The protein is Lipoprotein-releasing system ATP-binding protein LolD of Mesorhizobium japonicum (strain LMG 29417 / CECT 9101 / MAFF 303099) (Mesorhizobium loti (strain MAFF 303099)).